The sequence spans 51 residues: Ovomucoid (51 aa).

Residues 3-51 (IDCSGYPKPACTLEFFPLCGSDNQTYSNKCAFCNAAVEKNVTLNHIGEC) enclose the Kazal-like domain. 3 cysteine pairs are disulfide-bonded: Cys-5–Cys-35, Cys-13–Cys-32, and Cys-21–Cys-51. N-linked (GlcNAc...) asparagine glycosylation is present at Asn-42.

Its subcellular location is the secreted. This Eudromia elegans (Elegant crested-tinamou) protein is Ovomucoid.